The following is a 314-amino-acid chain: Acetaldehyde dehydrogenase 2 (314 aa).

Position 11–14 (Ser11–Ile14) interacts with NAD(+). Catalysis depends on Cys129, which acts as the Acyl-thioester intermediate. NAD(+)-binding positions include Ser160–Asn168 and Asn291.

Belongs to the acetaldehyde dehydrogenase family.

The enzyme catalyses acetaldehyde + NAD(+) + CoA = acetyl-CoA + NADH + H(+). The polypeptide is Acetaldehyde dehydrogenase 2 (Rhodococcus erythropolis (strain PR4 / NBRC 100887)).